The following is a 222-amino-acid chain: MFSKQVTDSPAYKWFDERLEVQALADDISSKYVPPHVNIFYCLGGITLVCFLIQFATGFAMTFYYKPTVTEALASVQYIMTEVNFGWLIRSIHRWSASMMVLMMILHTFRVYLTGGFKKPRELTWVTGVVMAVITVSFGVTGYSLPWDQIGYWAVKIVSGVPDAIPFVGPFIVELMRGSTSVGQATLTRFYSLHTFVLPWFIAVFMLLHFLMIRKQGISGPL.

Residues 39–59 (IFYCLGGITLVCFLIQFATGF) form a helical membrane-spanning segment. Cys-42 is a binding site for heme c. 2 residues coordinate heme b: His-93 and His-107. 3 helical membrane-spanning segments follow: residues 97–117 (ASMM…TGGF), 123–143 (LTWV…VTGY), and 193–213 (LHTF…FLMI). Heme b-binding residues include His-194 and His-209.

It belongs to the cytochrome b family. PetB subfamily. As to quaternary structure, the 4 large subunits of the cytochrome b6-f complex are cytochrome b6, subunit IV (17 kDa polypeptide, PetD), cytochrome f and the Rieske protein, while the 4 small subunits are PetG, PetL, PetM and PetN. The complex functions as a dimer. The cofactor is heme b. Heme c is required as a cofactor.

It localises to the cellular thylakoid membrane. In terms of biological role, component of the cytochrome b6-f complex, which mediates electron transfer between photosystem II (PSII) and photosystem I (PSI), cyclic electron flow around PSI, and state transitions. The sequence is that of Cytochrome b6 from Trichodesmium erythraeum (strain IMS101).